The primary structure comprises 255 residues: Syntaxin-6 (255 aa).

S2 is subject to N-acetylserine. S2 carries the post-translational modification Phosphoserine. Residues S2–Q168 are required for interaction with VPS51. At S2 to Q234 the chain is on the cytoplasmic side. The stretch at E41 to N74 forms a coiled coil. Phosphoserine occurs at positions 129 and 152. The t-SNARE coiled-coil homology domain maps to Q163–V225. A helical; Anchor for type IV membrane protein membrane pass occupies residues W235–L255.

This sequence belongs to the syntaxin family. As to quaternary structure, identified in a complex containing STX6, STX12 and VAMP4. This complex also includes VTI1A. Binds EEA1. Interacts with VPS45A and GOPC. Interacts with MARCHF2; the interaction promotes MARCHF2-mediated ubiquitination and degradation of CFTR. Interacts with MARCHF3. Interacts with BLTP3B (via C-terminal coiled-coil domain). Interacts with BAIAP3; this interaction is increased in the presence of calcium. Interacts with VPS13B.

Its subcellular location is the golgi apparatus membrane. The protein localises to the golgi apparatus. It is found in the trans-Golgi network membrane. It localises to the recycling endosome membrane. Its function is as follows. SNARE promoting movement of transport vesicles to target membranes. Targets endosomes to the trans-Golgi network, and may therefore function in retrograde trafficking. Together with SNARE STX12, promotes movement of vesicles from endosomes to the cell membrane, and may therefore function in the endocytic recycling pathway. The chain is Syntaxin-6 (Stx6) from Mus musculus (Mouse).